The chain runs to 244 residues: 3-oxoacyl-[acyl-carrier-protein] reductase FabG (244 aa).

NADP(+) contacts are provided by residues 12–15 (GANQ) and Thr-37. Ca(2+) contacts are provided by Lys-50 and Gly-53. Residues 59–60 (DL) and Asn-86 contribute to the NADP(+) site. Ser-138 is a binding site for substrate. Residue Asn-145 participates in Ca(2+) binding. Residue Tyr-151 is the Proton acceptor of the active site. NADP(+) contacts are provided by residues 151–155 (YSASK) and Ile-184. Residues Gln-233 and Thr-234 each coordinate Ca(2+).

Belongs to the short-chain dehydrogenases/reductases (SDR) family. As to quaternary structure, homotetramer.

It catalyses the reaction a (3R)-hydroxyacyl-[ACP] + NADP(+) = a 3-oxoacyl-[ACP] + NADPH + H(+). It participates in lipid metabolism; fatty acid biosynthesis. Its function is as follows. Catalyzes the NADPH-dependent reduction of beta-ketoacyl-ACP substrates to beta-hydroxyacyl-ACP products, the first reductive step in the elongation cycle of fatty acid biosynthesis. In Buchnera aphidicola subsp. Schizaphis graminum (strain Sg), this protein is 3-oxoacyl-[acyl-carrier-protein] reductase FabG (fabG).